The sequence spans 246 residues: MNANLPISKKRKFVSDGIFKAELNEFLTRELAEDGYSGVEVRVTPSRTEIIIMATKTQQVLGEKGRRIRELTAMVQKRFNFETGRIELYAEKVAARGLCAIAQAESLRYKLTGGLAVRRACYGVLRYIMESGAKGCEVVVSGKLRGQRAKSMKFVDGLMIHSGDPCNDYVETATRHVLLRQGVLGIKVKVMLPYDPKNKIGPKKPLPDNVSVVEPKEEKIYETPETEYKIPPPSKPLDDLSEAKVL.

The region spanning 23–94 (LNEFLTRELA…RIELYAEKVA (72 aa)) is the KH type-2 domain. The disordered stretch occupies residues 201–246 (GPKKPLPDNVSVVEPKEEKIYETPETEYKIPPPSKPLDDLSEAKVL). Basic and acidic residues-rich tracts occupy residues 214-228 (EPKE…ETEY) and 236-246 (PLDDLSEAKVL). Phosphothreonine is present on residues threonine 223 and threonine 226. Serine 241 carries the post-translational modification Phosphoserine.

This sequence belongs to the universal ribosomal protein uS3 family. In terms of assembly, interacts with LTV1; the interaction is RNA-independent.

The protein resides in the cytoplasm. Its subcellular location is the nucleus. Its function is as follows. Has DNA repair activity directed towards the mutagenic lesions 8-oxoguanine and abasic sites in DNA. It can cleave DNA containing 8-oxoguanine residues efficiently. Also acts as an ap lyase, cleaving phosphodiester bonds via a beta,delta elimination reaction. This chain is Small ribosomal subunit protein uS3 (RpS3), found in Drosophila melanogaster (Fruit fly).